The chain runs to 323 residues: Cytochrome c biogenesis protein CcsA (323 aa).

Transmembrane regions (helical) follow at residues 18–38 (VSVVITLHLITLLVNEIVGLY), 43–63 (KGMLVTFFCITGLLVTRWVYW), 71–91 (LYESLIFLSWSFYLIHMIPSF), 99–119 (LNVITAPSAIFTQGFATSGLL), 146–166 (LGYAALLGGSLLSVTLLIIIF), 227–247 (VISLGFIFLTIGILSGAVWAN), 256–276 (WDPKETWAFITWTIFAIYLHI), and 288–308 (AIVAFIGFLIIWICYFGVNLL).

The protein belongs to the CcmF/CycK/Ccl1/NrfE/CcsA family. As to quaternary structure, may interact with Ccs1.

Its subcellular location is the plastid. It is found in the chloroplast thylakoid membrane. In terms of biological role, required during biogenesis of c-type cytochromes (cytochrome c6 and cytochrome f) at the step of heme attachment. The sequence is that of Cytochrome c biogenesis protein CcsA from Spinacia oleracea (Spinach).